The sequence spans 622 residues: Iron transport multicopper oxidase FET5 (622 aa).

The N-terminal stretch at 1-18 (MLFYSFVWSVLAASVALA) is a signal peptide. Over 19-573 (KTHKLNYTAS…PKGFTTEGYL (555 aa)) the chain is Extracellular. N-linked (GlcNAc...) asparagine glycosylation is present at Asn24. Plastocyanin-like domains follow at residues 43–146 (IGFN…FIIH) and 192–301 (NILF…IQMR). Cu cation-binding residues include His79 and His81. N-linked (GlcNAc...) asparagine glycosylation is found at Asn86 and Asn115. Residues His128 and His130 each coordinate Cu cation. 5 N-linked (GlcNAc...) asparagine glycosylation sites follow: Asn196, Asn200, Asn246, Asn295, and Asn364. A Plastocyanin-like 3 domain is found at 392–514 (GDNINAQLLK…QGLASVFIEA (123 aa)). Residues His418, His421, and His423 each coordinate Cu cation. Residue Asn455 is glycosylated (N-linked (GlcNAc...) asparagine). Residues His496, Cys497, His498, and His502 each contribute to the Cu cation site. Residues 574 to 594 (ALIISTIIGVWGLYSIAQYGI) form a helical membrane-spanning segment. The Cytoplasmic segment spans residues 595-622 (GEVIPNDEKVYHTLREILAENEIEVSRG).

This sequence belongs to the multicopper oxidase family. As to quaternary structure, interacts with FTH1. It depends on Cu cation as a cofactor.

It is found in the cell membrane. Iron transport multicopper oxidase, which is required for Fe(2+) high affinity uptake. May be required to oxidize Fe(2+) and release it from the transporter. Essential component of copper-dependent iron transport. This is Iron transport multicopper oxidase FET5 (FET5) from Saccharomyces cerevisiae (strain ATCC 204508 / S288c) (Baker's yeast).